Consider the following 589-residue polypeptide: MRTHYCGQINAELAGQEVTLCGWVNKRRDLGGLIFIDLRDREGLLQVVFDPDQKALFETANSLRQEFCVRLSGKVNRRPESQVNKNMATGEVELLATDLEIFSRSEPLPIDFNQQVSEEARLRYRYLDLRRPQMNEKLQFRAKVTSAVRRFFDDNGFLDIETPMLTRATPEGARDYLVPSRTHKGRFFALPQSPQLFKQLLMMSGFDRYYQIVKCFRDEDLRADRQPEFTQIDIETSFMSAEQVMEITEQMARDLFKQLLDVDLGEFPSMTWHEAMRRFGSDKPDLRNPLELVDVADVLKDVEFKVFSGPANDEEGRVAAIRLPGQAENVSRKMIDEYTQFVGIYGAKGLAWIKVNDRSAGREGLQSPVLKFLPDEVIEPLLERMQAETGDVLFFGSDKSHVVAEALGALRLKLGKDFELVSNEWKPLWVVDFPMFEVADDGSLAALHHPFTAPVNVTPEELKANPAAAISNAYDMVLNGVELGGGSVRIHENAMQQAVFEVLGIEKDEAQEKFGFLLEALKYGTPPHAGLAFGLDRLVMLMVGASSIRDVIAFPKTTTAACVLTDAPGAANPAALQELGVKSIVKEDE.

An L-aspartate-binding site is contributed by Glu171. Residues 195–198 are aspartate; sequence QLFK. Arg217 is a binding site for L-aspartate. ATP is bound by residues 217-219 and Gln226; that span reads RDE. His448 contacts L-aspartate. Position 482 (Glu482) interacts with ATP. Position 489 (Arg489) interacts with L-aspartate. 534–537 contributes to the ATP binding site; the sequence is GLDR.

This sequence belongs to the class-II aminoacyl-tRNA synthetase family. Type 1 subfamily. As to quaternary structure, homodimer.

It localises to the cytoplasm. The catalysed reaction is tRNA(Asp) + L-aspartate + ATP = L-aspartyl-tRNA(Asp) + AMP + diphosphate. In terms of biological role, catalyzes the attachment of L-aspartate to tRNA(Asp) in a two-step reaction: L-aspartate is first activated by ATP to form Asp-AMP and then transferred to the acceptor end of tRNA(Asp). This is Aspartate--tRNA ligase from Idiomarina loihiensis (strain ATCC BAA-735 / DSM 15497 / L2-TR).